A 332-amino-acid polypeptide reads, in one-letter code: tRNA-dihydrouridine(20/20a) synthase (332 aa).

FMN contacts are provided by residues 19 to 21 (PML) and Q71. C101 functions as the Proton donor in the catalytic mechanism. FMN-binding positions include K140, H173, 213–215 (NGG), and 235–236 (GR).

The protein belongs to the Dus family. DusA subfamily. It depends on FMN as a cofactor.

The catalysed reaction is 5,6-dihydrouridine(20) in tRNA + NADP(+) = uridine(20) in tRNA + NADPH + H(+). It catalyses the reaction 5,6-dihydrouridine(20) in tRNA + NAD(+) = uridine(20) in tRNA + NADH + H(+). The enzyme catalyses 5,6-dihydrouridine(20a) in tRNA + NADP(+) = uridine(20a) in tRNA + NADPH + H(+). It carries out the reaction 5,6-dihydrouridine(20a) in tRNA + NAD(+) = uridine(20a) in tRNA + NADH + H(+). Catalyzes the synthesis of 5,6-dihydrouridine (D), a modified base found in the D-loop of most tRNAs, via the reduction of the C5-C6 double bond in target uridines. Specifically modifies U20 and U20a in tRNAs. The chain is tRNA-dihydrouridine(20/20a) synthase from Salmonella typhimurium (strain LT2 / SGSC1412 / ATCC 700720).